We begin with the raw amino-acid sequence, 671 residues long: Phosphoenolpyruvate carboxykinase (ATP) 1 (671 aa).

Over residues 1–10 (MSAGNGNATN) the composition is skewed to low complexity. Residues 1-44 (MSAGNGNATNGDGGFSFPKGPVMPKITTGAAKRGSGVCHDDSGP) form a disordered region. At serine 2 the chain carries N-acetylserine. Residue serine 62 is modified to Phosphoserine. Threonine 66 is modified (phosphothreonine). The disordered stretch occupies residues 100–127 (TRESGPKVVRGDPAEKKTDGSTTPAYAH). A compositionally biased stretch (basic and acidic residues) spans 108–118 (VRGDPAEKKTD). Substrate is bound at residue arginine 189. Positions 270 and 271 each coordinate Ca(2+). Tyrosine 328 and lysine 334 together coordinate substrate. Residues lysine 334, histidine 353, and 369-377 (GLSGTGKTT) contribute to the ATP site. The Mn(2+) site is built by lysine 334 and histidine 353. Aspartate 390 serves as a coordination point for Mn(2+). Ca(2+) is bound at residue glycine 404. ATP is bound by residues glutamate 418, arginine 455, 574-575 (RI), isoleucine 575, and threonine 580. Residue arginine 455 participates in substrate binding.

This sequence belongs to the phosphoenolpyruvate carboxykinase (ATP) family. As to quaternary structure, monomer. It depends on Mn(2+) as a cofactor. In terms of tissue distribution, expressed in cotyledons, flowers, siliques, seeds, leaves, stems and roots. Localized in mid-veins.

The protein resides in the cytoplasm. It carries out the reaction oxaloacetate + ATP = phosphoenolpyruvate + ADP + CO2. Its pathway is carbohydrate biosynthesis; gluconeogenesis. With respect to regulation, allosterically activated by calcium. It may represent the only case of a monomeric, allosteric enzyme. Its function is as follows. Involved in the gluconeogenesis. Catalyzes the conversion of oxaloacetate (OAA) to phosphoenolpyruvate (PEP) through direct phosphoryl transfer between the nucleoside triphosphate and OAA. In Arabidopsis thaliana (Mouse-ear cress), this protein is Phosphoenolpyruvate carboxykinase (ATP) 1.